A 148-amino-acid polypeptide reads, in one-letter code: Ubiquitin-conjugating enzyme E2-16 kDa (148 aa).

In terms of domain architecture, UBC core spans 2 to 148; that stretch reads SSSKRIAKEL…AKEWTKKYAV (147 aa). Ser-12 carries the post-translational modification Phosphoserine. The Glycyl thioester intermediate role is filled by Cys-86. Residue Lys-91 forms a Glycyl lysine isopeptide (Lys-Gly) (interchain with G-Cter in ubiquitin) linkage.

Belongs to the ubiquitin-conjugating enzyme family. In terms of assembly, component of the RSP5-UBA1-UBC5 ubiquitin ligase complex composed of E3 RSP5, E1 UBA1 and E2 UBC5. Post-translationally, the N-terminus is blocked.

It catalyses the reaction S-ubiquitinyl-[E1 ubiquitin-activating enzyme]-L-cysteine + [E2 ubiquitin-conjugating enzyme]-L-cysteine = [E1 ubiquitin-activating enzyme]-L-cysteine + S-ubiquitinyl-[E2 ubiquitin-conjugating enzyme]-L-cysteine.. It functions in the pathway protein modification; protein ubiquitination. Catalyzes the covalent attachment of ubiquitin to other proteins. Mediates the selective degradation of short-lived and abnormal proteins. The RSP5-UBA1-UBC5 ubiquitin ligase complex ubiquitinates RPO21 forming 'Lys-63'-linked polyubiquitin chains. The chain is Ubiquitin-conjugating enzyme E2-16 kDa (UBC5) from Saccharomyces cerevisiae (strain ATCC 204508 / S288c) (Baker's yeast).